The following is a 367-amino-acid chain: 15-cis-zeta-carotene isomerase, chloroplastic (367 aa).

The N-terminal 58 residues, 1-58, are a transit peptide targeting the chloroplast; that stretch reads MAVYHLLLSSPPSLLLLPPSPRRPNLTLIRRIPAHPRLGNSTSLLSSSSPVIRKILVR. 6 helical membrane passes run 95 to 115, 137 to 157, 172 to 192, 211 to 231, 269 to 289, and 339 to 359; these read SWVY…VVWI, EVAM…LASL, VLFA…FINH, AIWV…FNLL, LWIG…HHLF, and LPYL…PLMQ.

As to expression, expressed in leaves and at lower levels in roots.

The protein resides in the plastid. The protein localises to the chloroplast membrane. The catalysed reaction is 9,9',15-tri-cis-zeta-carotene = 9,9'-di-cis-zeta-carotene. Its function is as follows. Isomerase involved in the biosynthesis of carotenoids. Catalyzes the cis- to trans-conversion of the 15-cis-bond in 9,15,9'-tri-cis-zeta-carotene. The chain is 15-cis-zeta-carotene isomerase, chloroplastic (Z-ISO) from Arabidopsis thaliana (Mouse-ear cress).